A 246-amino-acid polypeptide reads, in one-letter code: Ribosomal RNA small subunit methyltransferase G (246 aa).

Residues Gly81, Phe86, 137 to 138, and Arg156 contribute to the S-adenosyl-L-methionine site; that span reads AE. The disordered stretch occupies residues 221–246; the sequence is LVLIRKERPTPKAYPRRAGVPAKSPL.

Belongs to the methyltransferase superfamily. RNA methyltransferase RsmG family.

It localises to the cytoplasm. In terms of biological role, specifically methylates the N7 position of a guanine in 16S rRNA. The protein is Ribosomal RNA small subunit methyltransferase G of Symbiobacterium thermophilum (strain DSM 24528 / JCM 14929 / IAM 14863 / T).